Here is a 348-residue protein sequence, read N- to C-terminus: Inactive rhomboid-related protein 2 (348 aa).

The EF-hand domain occupies 14 to 49 (IEASSWIRIFRAFDTDHDGLIQCEEMQKTIRDSTYS). Ca(2+) contacts are provided by Asp27, Asp29, Asp31, and Glu38. 7 helical membrane passes run 121 to 141 (PPIFLIFLSIVQLAFYLYYVV), 177 to 197 (LINVGIFHIIFNILIQLAIGV), 207 to 227 (IYILYFMGVLFGSILSLALDP), 229 to 249 (VFLCGGAAGSFSLIASHITTI), 263 to 283 (LPILIVFAALDYVLAVYQRFF), 290 to 310 (VSMYGHLGGLVAGILFTFILF), and 323 to 343 (FWVSLVLSGFFIAICITLIAA).

Belongs to the peptidase S54 family.

It is found in the membrane. Functionally, probable inactive serine protease. The protein is Inactive rhomboid-related protein 2 of Caenorhabditis elegans.